Here is a 231-residue protein sequence, read N- to C-terminus: MKVGIIGAMEQEVTILKEAMTNCQTVNKAGCTFFSGQINDVDVVLLQSGIGKVAAAVGTTILLDEYQPDVVINTGSAGGFDSSLNLGDVVISTEVRHHDADVTAFGYEIGQMAGQPAAFKADEKLMDLAEKALEQMANTHAVRGLICTGDAFVCTAERQAFIRENFPSVIAVEMEASAIAQTCHQFNTPFVVVRAISDVADKESPMSFEEFLPLAAKSSSEMVFKMLELVK.

E12 acts as the Proton acceptor in catalysis. Substrate is bound by residues G78, V153, and 174–175; that span reads ME. Catalysis depends on D198, which acts as the Proton donor.

It belongs to the PNP/UDP phosphorylase family. MtnN subfamily.

The catalysed reaction is S-adenosyl-L-homocysteine + H2O = S-(5-deoxy-D-ribos-5-yl)-L-homocysteine + adenine. It carries out the reaction S-methyl-5'-thioadenosine + H2O = 5-(methylsulfanyl)-D-ribose + adenine. It catalyses the reaction 5'-deoxyadenosine + H2O = 5-deoxy-D-ribose + adenine. The protein operates within amino-acid biosynthesis; L-methionine biosynthesis via salvage pathway; S-methyl-5-thio-alpha-D-ribose 1-phosphate from S-methyl-5'-thioadenosine (hydrolase route): step 1/2. Functionally, catalyzes the irreversible cleavage of the glycosidic bond in both 5'-methylthioadenosine (MTA) and S-adenosylhomocysteine (SAH/AdoHcy) to adenine and the corresponding thioribose, 5'-methylthioribose and S-ribosylhomocysteine, respectively. Also cleaves 5'-deoxyadenosine, a toxic by-product of radical S-adenosylmethionine (SAM) enzymes, into 5-deoxyribose and adenine. This is 5'-methylthioadenosine/S-adenosylhomocysteine nucleosidase from Vibrio parahaemolyticus serotype O3:K6 (strain RIMD 2210633).